The primary structure comprises 266 residues: Hydroxyethylthiazole kinase (266 aa).

Substrate is bound at residue methionine 46. ATP-binding residues include lysine 122 and threonine 166. A substrate-binding site is contributed by glycine 193.

This sequence belongs to the Thz kinase family. Mg(2+) is required as a cofactor.

The catalysed reaction is 5-(2-hydroxyethyl)-4-methylthiazole + ATP = 4-methyl-5-(2-phosphooxyethyl)-thiazole + ADP + H(+). It functions in the pathway cofactor biosynthesis; thiamine diphosphate biosynthesis; 4-methyl-5-(2-phosphoethyl)-thiazole from 5-(2-hydroxyethyl)-4-methylthiazole: step 1/1. Its function is as follows. Catalyzes the phosphorylation of the hydroxyl group of 4-methyl-5-beta-hydroxyethylthiazole (THZ). This chain is Hydroxyethylthiazole kinase, found in Caldivirga maquilingensis (strain ATCC 700844 / DSM 13496 / JCM 10307 / IC-167).